We begin with the raw amino-acid sequence, 227 residues long: UPF0659 protein YMR090W (227 aa).

The protein belongs to the UPF0659 family.

The protein localises to the cytoplasm. The polypeptide is UPF0659 protein YMR090W (Saccharomyces cerevisiae (strain ATCC 204508 / S288c) (Baker's yeast)).